We begin with the raw amino-acid sequence, 360 residues long: Protein Wnt-2 (360 aa).

The N-terminal stretch at M1 to S25 is a signal peptide. Disulfide bonds link C76/C87, C127/C135, C137/C157, C206/C220, C208/C215, C278/C309, C294/C304, C308/C348, C324/C339, C326/C336, and C331/C332. S212 carries O-palmitoleoyl serine; by PORCN lipidation. N295 carries N-linked (GlcNAc...) asparagine glycosylation.

This sequence belongs to the Wnt family. In terms of processing, palmitoleoylation is required for efficient binding to frizzled receptors. Depalmitoleoylation leads to Wnt signaling pathway inhibition.

The protein localises to the secreted. Its subcellular location is the extracellular space. It is found in the extracellular matrix. Ligand for members of the frizzled family of seven transmembrane receptors. Functions in the canonical Wnt signaling pathway that results in activation of transcription factors of the TCF/LEF family. Functions as a upstream regulator of FGF10 expression. Plays an important role in embryonic lung development. May contribute to embryonic brain development by regulating the proliferation of dopaminergic precursors and neurons. The protein is Protein Wnt-2 (WNT2) of Felis catus (Cat).